A 180-amino-acid chain; its full sequence is Insulin-like growth factor 2 (180 aa).

An N-terminal signal peptide occupies residues 1-24; that stretch reads MGIPVGKSMLVLLISLAFALCCIA. The b stretch occupies residues 25-52; it reads AYGPGETLCGGELVDTLQFVCSDRGFYF. Disulfide bonds link cysteine 33/cysteine 71, cysteine 45/cysteine 84, and cysteine 70/cysteine 75. The interval 53–64 is c; the sequence is SRPSSRANRRSR. The segment at 65–85 is a; that stretch reads GIVEECCFRSCDLALLETYCA. A d region spans residues 86-91; it reads TPAKSE. Residues 92 to 180 constitute a propeptide, e peptide; the sequence is RDVSTSQAVL…ASSEMSSNHQ (89 aa). The disordered stretch occupies residues 157 to 180; that stretch reads PLIVLPPKDPAHGGASSEMSSNHQ.

It belongs to the insulin family. Interacts with MYORG; this interaction is required for IGF2 secretion. Interacts with integrins ITGAV:ITGB3 and ITGA6:ITGB4; integrin-binding is required for IGF2 signaling. Interacts with IGFBP2. Proteolytically processed by PCSK4, proIGF2 is cleaved at Arg-128 and Arg-92 to generate big-IGF2 and mature IGF2. Expressed in the heart, blood serum, kidney and skeletal muscle including the tibialis anterior muscle.

The protein localises to the secreted. In terms of biological role, the insulin-like growth factors possess growth-promoting activity. Major fetal growth hormone in mammals. Plays a key role in regulating fetoplacental development. IGF2 is influenced by placental lactogen. Also involved in tissue differentiation. In adults, involved in glucose metabolism in adipose tissue, skeletal muscle and liver. Acts as a ligand for integrin which is required for IGF2 signaling. Positively regulates myogenic transcription factor MYOD1 function by facilitating the recruitment of transcriptional coactivators, thereby controlling muscle terminal differentiation. Inhibits myoblast differentiation and modulates metabolism via increasing the mitochondrial respiration rate. Preptin undergoes glucose-mediated co-secretion with insulin, and acts as a physiological amplifier of glucose-mediated insulin secretion. Exhibits osteogenic properties by increasing osteoblast mitogenic activity through phosphoactivation of MAPK1 and MAPK3. In Mus musculus (Mouse), this protein is Insulin-like growth factor 2.